Consider the following 856-residue polypeptide: Bifunctional uridylyltransferase/uridylyl-removing enzyme (856 aa).

Residues 1–320 (MTLSAAPLQH…YCQVPRVTQH (320 aa)) form a uridylyltransferase region. Residues 321–678 (ISEYFHAVNG…ARLADDHEGL (358 aa)) form a uridylyl-removing region. In terms of domain architecture, HD spans 439 to 561 (VDEHILMVVR…VRTPRRLAAL (123 aa)). ACT domains lie at 679–760 (QVLI…LPPQ) and 788–856 (ILSI…ALRI).

The protein belongs to the GlnD family. Mg(2+) is required as a cofactor.

It catalyses the reaction [protein-PII]-L-tyrosine + UTP = [protein-PII]-uridylyl-L-tyrosine + diphosphate. The catalysed reaction is [protein-PII]-uridylyl-L-tyrosine + H2O = [protein-PII]-L-tyrosine + UMP + H(+). Uridylyltransferase (UTase) activity is inhibited by glutamine, while glutamine activates uridylyl-removing (UR) activity. Functionally, modifies, by uridylylation and deuridylylation, the PII regulatory proteins (GlnB and homologs), in response to the nitrogen status of the cell that GlnD senses through the glutamine level. Under low glutamine levels, catalyzes the conversion of the PII proteins and UTP to PII-UMP and PPi, while under higher glutamine levels, GlnD hydrolyzes PII-UMP to PII and UMP (deuridylylation). Thus, controls uridylylation state and activity of the PII proteins, and plays an important role in the regulation of nitrogen assimilation and metabolism. The protein is Bifunctional uridylyltransferase/uridylyl-removing enzyme of Chromobacterium violaceum (strain ATCC 12472 / DSM 30191 / JCM 1249 / CCUG 213 / NBRC 12614 / NCIMB 9131 / NCTC 9757 / MK).